A 375-amino-acid polypeptide reads, in one-letter code: Lipid-A-disaccharide synthase (375 aa).

The protein belongs to the LpxB family.

The enzyme catalyses a lipid X + a UDP-2-N,3-O-bis[(3R)-3-hydroxyacyl]-alpha-D-glucosamine = a lipid A disaccharide + UDP + H(+). Its pathway is bacterial outer membrane biogenesis; LPS lipid A biosynthesis. Functionally, condensation of UDP-2,3-diacylglucosamine and 2,3-diacylglucosamine-1-phosphate to form lipid A disaccharide, a precursor of lipid A, a phosphorylated glycolipid that anchors the lipopolysaccharide to the outer membrane of the cell. This is Lipid-A-disaccharide synthase from Pseudomonas entomophila (strain L48).